We begin with the raw amino-acid sequence, 404 residues long: Glycosylated lysosomal membrane protein (404 aa).

The signal sequence occupies residues 1-26; the sequence is MSGYEKPSRGWGFCALSPVLLSLLMA. The Lumenal segment spans residues 27 to 370; that stretch reads APLGLLGEET…VDALSPLVLG (344 aa). N63, N132, N157, N185, and N228 each carry an N-linked (GlcNAc...) asparagine glycan. A helical transmembrane segment spans residues 371 to 391; it reads IMAVALGAPALMLLAGGLFLL. Residues 392 to 404 are Cytoplasmic-facing; it reads LGRKRDSEYQSIN. The Lysosomal targeting motif motif lies at 400–404; it reads YQSIN.

This sequence belongs to the GLMP family. In terms of assembly, interacts (via lumenal domain) with lysosomal protein MFSD1; the interaction starts while both proteins are still in the endoplasmic reticulum and is required for stabilization of MFSD1 in lysosomes but has no direct effect on its targeting to lysosomes or transporter activity. Post-translationally, highly N-glycosylated. N-glycosylation is essential for GLMP stability and for MFSD1 lysosomal localization.

The protein localises to the lysosome membrane. Required to protect lysosomal transporter MFSD1 from lysosomal proteolysis and for MFSD1 lysosomal localization. The chain is Glycosylated lysosomal membrane protein from Bos taurus (Bovine).